The sequence spans 408 residues: Tripartite motif containing 13 (408 aa).

The segment at 10-58 (CPICCSLFDDPRVLPCSHNFCKKCLDGVLEENSRTMQWRPSSFKCPTCR) adopts an RING-type zinc-finger fold. A B box-type zinc finger spans residues 89–131 (PKMPVCKEHSDQPLNIFCSTDLKLICGSCATTGEHKKHVFSSI). 4 residues coordinate Zn(2+): Cys-94, His-97, Cys-117, and His-123. A helical membrane pass occupies residues 322–342 (ILVVACLILLLVTFLCAYPFI).

Its subcellular location is the endoplasmic reticulum membrane. The protein operates within protein modification; protein ubiquitination. In terms of biological role, E3 ubiquitin ligase involved in the retrotranslocation and turnover of membrane and secretory proteins from the ER through a set of processes named ER-associated degradation (ERAD). This process acts on misfolded proteins as well as in the regulated degradation of correctly folded proteins. This is Tripartite motif containing 13 (trim13) from Xenopus tropicalis (Western clawed frog).